A 322-amino-acid chain; its full sequence is CRISPR-associated protein Cas1 1 (322 aa).

Mn(2+) contacts are provided by Glu-149, His-214, and Glu-229.

This sequence belongs to the CRISPR-associated endonuclease Cas1 family. In terms of assembly, homodimer, forms a heterotetramer with a Cas2 homodimer. The cofactor is Mg(2+). It depends on Mn(2+) as a cofactor.

Its function is as follows. CRISPR (clustered regularly interspaced short palindromic repeat), is an adaptive immune system that provides protection against mobile genetic elements (viruses, transposable elements and conjugative plasmids). CRISPR clusters contain spacers, sequences complementary to antecedent mobile elements, and target invading nucleic acids. CRISPR clusters are transcribed and processed into CRISPR RNA (crRNA). Acts as a dsDNA endonuclease. Involved in the integration of spacer DNA into the CRISPR cassette. This Methanobrevibacter ruminantium (strain ATCC 35063 / DSM 1093 / JCM 13430 / OCM 146 / M1) (Methanobacterium ruminantium) protein is CRISPR-associated protein Cas1 1.